Consider the following 400-residue polypeptide: Acetate kinase (400 aa).

Asparagine 7 is a Mg(2+) binding site. Lysine 14 is a binding site for ATP. A substrate-binding site is contributed by arginine 91. Residue aspartate 148 is the Proton donor/acceptor of the active site. Residues 208 to 212 (HVGNG), 283 to 285 (DMR), and 331 to 335 (GVGEN) contribute to the ATP site. Glutamate 385 is a binding site for Mg(2+).

The protein belongs to the acetokinase family. As to quaternary structure, homodimer. Mg(2+) is required as a cofactor. Mn(2+) serves as cofactor.

Its subcellular location is the cytoplasm. It carries out the reaction acetate + ATP = acetyl phosphate + ADP. It participates in metabolic intermediate biosynthesis; acetyl-CoA biosynthesis; acetyl-CoA from acetate: step 1/2. Functionally, catalyzes the formation of acetyl phosphate from acetate and ATP. Can also catalyze the reverse reaction. This Parabacteroides distasonis (strain ATCC 8503 / DSM 20701 / CIP 104284 / JCM 5825 / NCTC 11152) protein is Acetate kinase.